The chain runs to 329 residues: Beta-tectorin (329 aa).

Residues 1–17 (MVTKAFVLLAIFAEASA) form the signal peptide. In terms of domain architecture, ZP spans 19–283 (SCAPNKADVI…LSCPVTCDKR (265 aa)). N-linked (GlcNAc...) asparagine glycans are attached at residues asparagine 80, asparagine 104, asparagine 116, and asparagine 145. Cysteine 204 and cysteine 264 are joined by a disulfide. Residue glycine 305 is the site of GPI-anchor amidated glycine attachment. A propeptide spans 306–329 (FSSLYSFSDVLHHLIMMLGICAVL) (removed in mature form).

As to quaternary structure, may form homomeric filament after self-association or heteromeric filament after association with alpha-tectorin. Interacts with CEACAM16. In terms of processing, the presence of a hydrophobic C-terminus preceded by a potential cleavage site strongly suggests that tectorins are synthesized as glycosylphosphatidylinositol-linked, membrane-bound precursors. Tectorins are targeted to the apical surface of the inner ear epithelia by the lipid and proteolytically released into the extracellular compartment.

The protein localises to the cell membrane. The protein resides in the secreted. It localises to the extracellular space. Its subcellular location is the extracellular matrix. One of the major non-collagenous components of the tectorial membrane. The tectorial membrane is an extracellular matrix of the inner ear that covers the neuroepithelium of the cochlea and contacts the stereocilia bundles of specialized sensory hair cells. Sound induces movement of these hair cells relative to the tectorial membrane, deflects the stereocilia and leads to fluctuations in hair-cell membrane potential, transducing sound into electrical signals. The polypeptide is Beta-tectorin (TECTB) (Homo sapiens (Human)).